A 518-amino-acid chain; its full sequence is Equilibrative nucleoside transporter 4 (518 aa).

A compositionally biased stretch (basic and acidic residues) spans 1–10 (MGSKGAERRK). The interval 1–21 (MGSKGAERRKQATPGQTPEGN) is disordered. The Extracellular segment spans residues 1–66 (MGSKGAERRK…EEAVPDDRYH (66 aa)). Residues 67–87 (GIYFAMLLAGVGFLLPYNSFI) traverse the membrane as a helical segment. The Cytoplasmic segment spans residues 88–99 (TDVDYLHHKFEG). Residues 100–120 (TSIVFDMGLTYILVALVAVIL) traverse the membrane as a helical segment. Topologically, residues 121-133 (NNVLVEMLSLHTR) are extracellular. Residues 134–154 (ITVGYLFALGPLLFVTIFDVW) traverse the membrane as a helical segment. The Cytoplasmic portion of the chain corresponds to 155-157 (LER). The chain crosses the membrane as a helical span at residues 158–178 (FTIKQAYVINLMSMGTVAFGC). Residues 179-198 (TVQQSSFYGYMGMLPKRYTQ) are Extracellular-facing. A helical transmembrane segment spans residues 199 to 218 (GVMTGESTAGVIISLSRIFT). Residues 219–229 (KLLIKDERKNT) lie on the Cytoplasmic side of the membrane. A helical transmembrane segment spans residues 230–250 (IIFFVISICMVLVCFILHLLV). Residues 251 to 342 (RRTRFVQYYT…MILHRYVVAR (92 aa)) lie on the Extracellular side of the membrane. The chain crosses the membrane as a helical span at residues 343 to 363 (VIWTYMLSIAVTYFITLCLFP). At 364–376 (GLESEIKNATLGE) the chain is on the cytoplasmic side. A helical membrane pass occupies residues 377 to 397 (WLPILIMAIFNISDFVGKILA). The Extracellular portion of the chain corresponds to 398 to 407 (AVPYEWNGTR). Residues 408–428 (LLFFSCVRVVFIPLFIMCVYP) traverse the membrane as a helical segment. The Cytoplasmic portion of the chain corresponds to 429 to 439 (AQMPMFSHPAW). The chain crosses the membrane as a helical span at residues 440–460 (PCIFSLFMGITNGYFGSVPMI). At 461 to 476 (HAAGKVAPEQRELAGN) the chain is on the extracellular side. The chain crosses the membrane as a helical span at residues 477-497 (IMTVSYMSGLMLGSVVAYAAY). Over 498–518 (SFTASGSSFHSQTGYNFTQGY) the chain is Cytoplasmic.

It belongs to the SLC29A/ENT transporter (TC 2.A.57) family.

It is found in the membrane. Functions as a polyspecific organic cation transporter, efficiently transporting many organic cations such as monoamine neurotransmitters 1-methyl-4-phenylpyridinium and biogenic amines including serotonin, dopamine, norepinephrine and epinephrine. May play a role in regulating central nervous system homeostasis of monoamine neurotransmitters. May be involved in luminal transport of organic cations in the kidney and seems to use luminal proton gradient to drive organic cation reabsorption. Does not seem to transport nucleoside and nucleoside analogs such as uridine, cytidine, thymidine, adenosine, inosine, guanosine, and azidothymidine. This Danio rerio (Zebrafish) protein is Equilibrative nucleoside transporter 4 (slc29a4).